Here is a 208-residue protein sequence, read N- to C-terminus: Uracil phosphoribosyltransferase (208 aa).

5-phospho-alpha-D-ribose 1-diphosphate-binding positions include Arg-78, Arg-103, and 130 to 138 (DPMLATGGS). Residues Ile-193 and 198 to 200 (GDA) each bind uracil. Residue Asp-199 coordinates 5-phospho-alpha-D-ribose 1-diphosphate.

This sequence belongs to the UPRTase family. The cofactor is Mg(2+).

The catalysed reaction is UMP + diphosphate = 5-phospho-alpha-D-ribose 1-diphosphate + uracil. The protein operates within pyrimidine metabolism; UMP biosynthesis via salvage pathway; UMP from uracil: step 1/1. Its activity is regulated as follows. Allosterically activated by GTP. Its function is as follows. Catalyzes the conversion of uracil and 5-phospho-alpha-D-ribose 1-diphosphate (PRPP) to UMP and diphosphate. The chain is Uracil phosphoribosyltransferase from Neisseria meningitidis serogroup A / serotype 4A (strain DSM 15465 / Z2491).